We begin with the raw amino-acid sequence, 103 residues long: Large ribosomal subunit protein bL21 (103 aa).

Belongs to the bacterial ribosomal protein bL21 family. As to quaternary structure, part of the 50S ribosomal subunit. Contacts protein L20.

In terms of biological role, this protein binds to 23S rRNA in the presence of protein L20. This is Large ribosomal subunit protein bL21 from Methylibium petroleiphilum (strain ATCC BAA-1232 / LMG 22953 / PM1).